The chain runs to 261 residues: Glutamate racemase (261 aa).

Substrate contacts are provided by residues 7–8 and 39–40; these read DS and YG. Cys-71 (proton donor/acceptor) is an active-site residue. 72–73 is a binding site for substrate; sequence NT. Cys-184 serves as the catalytic Proton donor/acceptor. Substrate is bound at residue 185–186; sequence TH.

It belongs to the aspartate/glutamate racemases family.

The catalysed reaction is L-glutamate = D-glutamate. It functions in the pathway cell wall biogenesis; peptidoglycan biosynthesis. In terms of biological role, provides the (R)-glutamate required for cell wall biosynthesis. The sequence is that of Glutamate racemase from Aliarcobacter butzleri (strain RM4018) (Arcobacter butzleri).